The following is a 234-amino-acid chain: Peroxisomal coenzyme A diphosphatase ndx-8 (234 aa).

In terms of domain architecture, Nudix hydrolase spans 27 to 162 (EQDAGVLILL…TFLIDEFYMV (136 aa)). The Nudix box motif lies at 66-90 (GGMMDDEDGQNVRRTAIREAYEEVG). 2 residues coordinate Mg(2+): glutamate 84 and glutamate 88. A helical membrane pass occupies residues 170–190 (YPTTYGVTALMCIVVAIGLLG). The Microbody targeting signal signature appears at 232–234 (SKI).

The protein belongs to the Nudix hydrolase family. The cofactor is Mg(2+). Requires Mn(2+) as cofactor.

The protein localises to the peroxisome membrane. Coenzyme A diphosphatase which mediates the cleavage of CoA into 3',5'-ADP and 4'-phosphopantetheine. This is Peroxisomal coenzyme A diphosphatase ndx-8 (ndx-8) from Caenorhabditis elegans.